We begin with the raw amino-acid sequence, 237 residues long: Putative biotin ligase (237 aa).

Residues 1–191 enclose the BPL/LPL catalytic domain; the sequence is MEIIHLSEID…KKYKKYSITI (191 aa).

Belongs to the biotin--protein ligase family.

It carries out the reaction biotin + L-lysyl-[protein] + ATP = N(6)-biotinyl-L-lysyl-[protein] + AMP + diphosphate + H(+). This chain is Putative biotin ligase, found in Methanocaldococcus jannaschii (strain ATCC 43067 / DSM 2661 / JAL-1 / JCM 10045 / NBRC 100440) (Methanococcus jannaschii).